We begin with the raw amino-acid sequence, 462 residues long: Asparagine--tRNA ligase (462 aa).

This sequence belongs to the class-II aminoacyl-tRNA synthetase family. As to quaternary structure, homodimer.

The protein localises to the cytoplasm. It carries out the reaction tRNA(Asn) + L-asparagine + ATP = L-asparaginyl-tRNA(Asn) + AMP + diphosphate + H(+). This chain is Asparagine--tRNA ligase, found in Synechocystis sp. (strain ATCC 27184 / PCC 6803 / Kazusa).